We begin with the raw amino-acid sequence, 391 residues long: Heme A synthase (391 aa).

The next 8 membrane-spanning stretches (helical) occupy residues 37–57 (IRLWLMALFLLVMAMIVVGGL), 121–141 (RQLGRVIGLVWAVGFLGFLAA), 152–172 (LLALGALGGLQGGIGWWMVAS), 186–206 (LATHLGLAFIILGLIAWQALL), 229–249 (TTVLIGVAFLQIVLGALVAGI), 298–318 (FLHRMAGYTLAALGLIFWIFG), 332–352 (LLAMALLAQILLGVGTVLSAA), and 354–374 (WQVAIAHQVGAVVIWVLILHA). H300 provides a ligand contact to heme. H360 provides a ligand contact to heme.

This sequence belongs to the COX15/CtaA family. Type 2 subfamily. Interacts with CtaB. It depends on heme b as a cofactor.

It localises to the cell membrane. It catalyses the reaction Fe(II)-heme o + 2 A + H2O = Fe(II)-heme a + 2 AH2. It functions in the pathway porphyrin-containing compound metabolism; heme A biosynthesis; heme A from heme O: step 1/1. Its function is as follows. Catalyzes the conversion of heme O to heme A by two successive hydroxylations of the methyl group at C8. The first hydroxylation forms heme I, the second hydroxylation results in an unstable dihydroxymethyl group, which spontaneously dehydrates, resulting in the formyl group of heme A. In Cereibacter sphaeroides (strain ATCC 17023 / DSM 158 / JCM 6121 / CCUG 31486 / LMG 2827 / NBRC 12203 / NCIMB 8253 / ATH 2.4.1.) (Rhodobacter sphaeroides), this protein is Heme A synthase.